We begin with the raw amino-acid sequence, 495 residues long: Trimethylamine methyltransferase MttB1 (495 aa).

Residue Pyl334 is a non-standard amino acid, pyrrolysine.

Belongs to the trimethylamine methyltransferase family. In terms of assembly, can form a complex with MttC.

It catalyses the reaction Co(I)-[trimethylamine-specific corrinoid protein] + trimethylamine + H(+) = methyl-Co(III)-[trimethylamine-specific corrinoid protein] + dimethylamine. It participates in one-carbon metabolism; methanogenesis from trimethylamine. Its function is as follows. Catalyzes the transfer of a methyl group from trimethylamine to the corrinoid cofactor of MttC. The polypeptide is Trimethylamine methyltransferase MttB1 (mttB1) (Methanosarcina acetivorans (strain ATCC 35395 / DSM 2834 / JCM 12185 / C2A)).